We begin with the raw amino-acid sequence, 702 residues long: Cytolytic toxin-alpha (702 aa).

A structural MACPF/CDC pore-forming domain region spans residues 2-265 (SSDIIMAGLG…KADLLVRDIS (264 aa)). Asparagine 93, asparagine 100, asparagine 201, asparagine 287, and asparagine 311 each carry an N-linked (GlcNAc...) asparagine glycan. A structural FAT domain region spans residues 266-385 (QGLVRKVHSI…DIIEETKHKA (120 aa)). The segment at 386–513 (VLSQSQMVKD…PIISAVEKIV (128 aa)) is thioredoxin (THX) domain. The B30.2/SPRY domain maps to 505 to 702 (IISAVEKIVD…RPYHGTVRLL (198 aa)). Residue asparagine 530 is glycosylated (N-linked (GlcNAc...) asparagine).

It belongs to the SNTX/VTX toxin family. As to quaternary structure, heterodimer of alpha and beta subunits; non-covalently linked. Also associates into tetramers or even higher aggregates. Post-translationally, intrachain disulfide bonds may be present in the heterodimer. Expressed by the venom gland.

It is found in the secreted. Functionally, this heterodimer induces potent hemolytic activities (when tested on rabbit erythrocytes, EC(50)=25-56 ng/mL) due to its ability to form pores in the cell membrane. The pore may be composed of 10 alpha/beta heterodimers. The toxin shows cardiovascular effects that include a vasorelaxant action that may involve the L-arginine-nitric oxid synthase pathway. In addition, it displays edema-inducing activities, increases vascular permeability. It also shows myotoxic activities and interferes irreversibly with neuromuscular function. It also induces irreversible platelet aggregation in rabbit or rat (but not in human or mouse) whole blood. In addition, it has been observed to increase spontaneous quantal acetylcholine release from isolated frog cutaneous pectoris motor endings. The protein is Cytolytic toxin-alpha of Scorpaena plumieri (Spotted scorpionfish).